Here is a 340-residue protein sequence, read N- to C-terminus: Mitochondrial carrier protein CoAc1 (340 aa).

Helical transmembrane passes span 22–42 (ALDL…AGAF), 85–105 (FYKG…LHYM), 130–147 (LLAG…TYPL), 199–219 (GVGP…YIYE), 237–257 (LSCG…LDVV), and 297–317 (FAGL…GFTT). Solcar repeat units follow at residues 27–113 (PVYA…YRCW), 124–224 (TGPV…LKSQ), and 231–324 (DSVI…MKAL).

It belongs to the mitochondrial carrier (TC 2.A.29) family. As to expression, expressed throughout the plant.

The protein resides in the mitochondrion inner membrane. Required for the accumulation of coenzyme A in the mitochondrial matrix. The chain is Mitochondrial carrier protein CoAc1 from Zea mays (Maize).